Here is a 424-residue protein sequence, read N- to C-terminus: Serine--tRNA ligase (424 aa).

229-231 is an L-serine binding site; that stretch reads TAE. Residues 260 to 262 and Val-276 contribute to the ATP site; that span reads RTE. Glu-283 contacts L-serine. 347–350 is a binding site for ATP; the sequence is EVTS. Thr-382 lines the L-serine pocket.

It belongs to the class-II aminoacyl-tRNA synthetase family. Type-1 seryl-tRNA synthetase subfamily. As to quaternary structure, homodimer. The tRNA molecule binds across the dimer.

The protein resides in the cytoplasm. The enzyme catalyses tRNA(Ser) + L-serine + ATP = L-seryl-tRNA(Ser) + AMP + diphosphate + H(+). It catalyses the reaction tRNA(Sec) + L-serine + ATP = L-seryl-tRNA(Sec) + AMP + diphosphate + H(+). Its pathway is aminoacyl-tRNA biosynthesis; selenocysteinyl-tRNA(Sec) biosynthesis; L-seryl-tRNA(Sec) from L-serine and tRNA(Sec): step 1/1. Catalyzes the attachment of serine to tRNA(Ser). Is also able to aminoacylate tRNA(Sec) with serine, to form the misacylated tRNA L-seryl-tRNA(Sec), which will be further converted into selenocysteinyl-tRNA(Sec). The polypeptide is Serine--tRNA ligase (Rubrobacter xylanophilus (strain DSM 9941 / JCM 11954 / NBRC 16129 / PRD-1)).